The following is a 475-amino-acid chain: Argininosuccinate lyase (475 aa).

Belongs to the lyase 1 family. Argininosuccinate lyase subfamily.

The protein localises to the cytoplasm. It catalyses the reaction 2-(N(omega)-L-arginino)succinate = fumarate + L-arginine. It functions in the pathway amino-acid biosynthesis; L-arginine biosynthesis; L-arginine from L-ornithine and carbamoyl phosphate: step 3/3. The chain is Argininosuccinate lyase from Leifsonia xyli subsp. xyli (strain CTCB07).